The sequence spans 276 residues: Syntaxin-12 (276 aa).

S2 is modified (N-acetylserine). At 2 to 248 (SYGPLDMYRN…RAAYYQKKSR (247 aa)) the chain is on the cytoplasmic side. Residues 33-131 (IQRISQATAQ…RRVSEKEKES (99 aa)) are a coiled coil. Phosphoserine is present on residues S139, S142, S218, and S225. The t-SNARE coiled-coil homology domain occupies 178-240 (LELIKERETA…ERATEQLQRA (63 aa)). Residues 249–269 (KKMCILVLVLSVIILILGLII) form a helical; Anchor for type IV membrane protein membrane-spanning segment. At 270–276 (WLVYKTK) the chain is on the vesicular side.

Belongs to the syntaxin family. In terms of assembly, interacts with NAPA and SNAP23. Identified in a complex containing STX6, STX12, VAMP4 and VTI1A. Associates with the BLOC-1 complex. Interacts with BLOC1S6. Interacts with GRIPAP1. Forms a complex with GRIP1, GRIA2 and NSG1; controls the intracellular fate of AMPAR and the endosomal sorting of the GRIA2 subunit toward recycling and membrane targeting. Interacts with NSG1. Interacts with TPC1. Interacts (via N-terminus) with VPS13B.

The protein resides in the endosome membrane. Its subcellular location is the golgi apparatus membrane. It localises to the endomembrane system. It is found in the early endosome membrane. The protein localises to the recycling endosome membrane. Functionally, SNARE promoting fusion of transport vesicles with target membranes. Together with SNARE STX6, promotes movement of vesicles from endosomes to the cell membrane, and may therefore function in the endocytic recycling pathway. Through complex formation with GRIP1, GRIA2 and NSG1 controls the intracellular fate of AMPAR and the endosomal sorting of the GRIA2 subunit toward recycling and membrane targeting. This chain is Syntaxin-12 (STX12), found in Homo sapiens (Human).